Consider the following 262-residue polypeptide: Indole-3-glycerol phosphate synthase (262 aa).

It belongs to the TrpC family.

It carries out the reaction 1-(2-carboxyphenylamino)-1-deoxy-D-ribulose 5-phosphate + H(+) = (1S,2R)-1-C-(indol-3-yl)glycerol 3-phosphate + CO2 + H2O. It functions in the pathway amino-acid biosynthesis; L-tryptophan biosynthesis; L-tryptophan from chorismate: step 4/5. The protein is Indole-3-glycerol phosphate synthase of Chlorobium luteolum (strain DSM 273 / BCRC 81028 / 2530) (Pelodictyon luteolum).